The chain runs to 493 residues: Ketol-acid reductoisomerase (NADP(+)) (493 aa).

Residues Leu17–Ser208 enclose the KARI N-terminal Rossmann domain. Residues Cys45–Gln48, Arg68, Arg76, Ser78, and Asp108–Gln110 contribute to the NADP(+) site. The active site involves His132. Gly158 lines the NADP(+) pocket. KARI C-terminal knotted domains lie at Ser209 to Ser344 and Ser345 to Met486. Mg(2+)-binding residues include Asp217, Glu221, Glu389, and Glu393. Ser414 is a binding site for substrate.

It belongs to the ketol-acid reductoisomerase family. Requires Mg(2+) as cofactor.

It catalyses the reaction (2R)-2,3-dihydroxy-3-methylbutanoate + NADP(+) = (2S)-2-acetolactate + NADPH + H(+). The catalysed reaction is (2R,3R)-2,3-dihydroxy-3-methylpentanoate + NADP(+) = (S)-2-ethyl-2-hydroxy-3-oxobutanoate + NADPH + H(+). It functions in the pathway amino-acid biosynthesis; L-isoleucine biosynthesis; L-isoleucine from 2-oxobutanoate: step 2/4. The protein operates within amino-acid biosynthesis; L-valine biosynthesis; L-valine from pyruvate: step 2/4. In terms of biological role, involved in the biosynthesis of branched-chain amino acids (BCAA). Catalyzes an alkyl-migration followed by a ketol-acid reduction of (S)-2-acetolactate (S2AL) to yield (R)-2,3-dihydroxy-isovalerate. In the isomerase reaction, S2AL is rearranged via a Mg-dependent methyl migration to produce 3-hydroxy-3-methyl-2-ketobutyrate (HMKB). In the reductase reaction, this 2-ketoacid undergoes a metal-dependent reduction by NADPH to yield (R)-2,3-dihydroxy-isovalerate. This chain is Ketol-acid reductoisomerase (NADP(+)), found in Shewanella amazonensis (strain ATCC BAA-1098 / SB2B).